The sequence spans 359 residues: Peroxisome assembly protein 12 (359 aa).

Residues 1 to 19 (MAEHGAHFTAASVADDQPS) are Peroxisomal matrix-facing. Residues 20 to 47 (IFEVVAQDSLMTAVRPALQHVVKVLAES) form a helical membrane-spanning segment. The Cytoplasmic portion of the chain corresponds to 48 to 51 (NPTH). Residues 52–76 (YGFLWRWFDEIFTLLDLLLQQHYLS) traverse the membrane as a helical segment. Over 77 to 109 (RTSASFSENFYGLKRIVMGDTHKSQRLASAGLP) the chain is Peroxisomal matrix. The helical transmembrane segment at 110 to 139 (KQQLWKSIMFLVLLPYLKVKLEKLVSSLRE) threads the bilayer. The Cytoplasmic segment spans residues 140–144 (EDEYS). A helical membrane pass occupies residues 145–183 (IHPPSSRWKRFYRAFLAAYPFVNMAWEGWFLVQQLRYIL). Residues 184 to 249 (GKAQHHSPLL…VGGVALSLST (66 aa)) are Peroxisomal matrix-facing. A helical membrane pass occupies residues 250–277 (GLSVGVFFLQFLDWWYSSENQETIKSLT). Over 278-359 (ALPTPPPPVH…HLIKLYSPEN (82 aa)) the chain is Cytoplasmic. Zn(2+) is bound by residues C304, C307, C325, and C328. The RING-type; degenerate zinc finger occupies 304–343 (CPLCRKTRVNDTVLATSGYVFCYRCVFHYVRSHQACPITG).

The protein belongs to the pex2/pex10/pex12 family. Component of the PEX2-PEX10-PEX12 retrotranslocation channel, composed of PEX2, PEX10 and PEX12. Interacts with PEX19 via its cytoplasmic domain.

Its subcellular location is the peroxisome membrane. It functions in the pathway protein modification; protein ubiquitination. Component of a retrotranslocation channel required for peroxisome organization by mediating export of the PEX5 receptor from peroxisomes to the cytosol, thereby promoting PEX5 recycling. The retrotranslocation channel is composed of PEX2, PEX10 and PEX12; each subunit contributing transmembrane segments that coassemble into an open channel that specifically allows the passage of PEX5 through the peroxisomal membrane. PEX12 also regulates PEX5 recycling by activating the E3 ubiquitin-protein ligase activity of PEX10. When PEX5 recycling is compromised, PEX12 stimulates PEX10-mediated polyubiquitination of PEX5, leading to its subsequent degradation. The sequence is that of Peroxisome assembly protein 12 from Homo sapiens (Human).